The primary structure comprises 184 residues: C-phycoerythrin class 1 subunit beta (184 aa).

The (2R,3E)-phycoerythrobilin site is built by cysteine 50 and cysteine 61. The residue at position 72 (asparagine 72) is an N4-methylasparagine. (2R,3E)-phycoerythrobilin-binding residues include cysteine 82 and cysteine 165.

The protein belongs to the phycobiliprotein family. Heterodimer of an alpha and a beta chain. Contains three covalently linked phycoerythrobilin chromophores.

It localises to the cellular thylakoid membrane. Functionally, light-harvesting photosynthetic bile pigment-protein from the phycobiliprotein complex. This chain is C-phycoerythrin class 1 subunit beta (cpeB), found in Synechococcus sp. (strain WH8020).